We begin with the raw amino-acid sequence, 413 residues long: Gamma-DL-glutamyl hydrolase (413 aa).

A signal peptide spans Met-1 to Ala-32. 3 NlpC/P60 domains span residues Asp-33–Ala-159, Ala-163–Asp-287, and Ile-291–Gln-413. Cys-194 (nucleophile) is an active-site residue. His-247 functions as the Proton acceptor in the catalytic mechanism. The active site involves Gln-259.

Belongs to the peptidase C40 family.

It is found in the secreted. The protein resides in the cell wall. With respect to regulation, inhibited by pretreatment with 1 mM 4-(hydroxymercuri)benzoate, a sulfhydryl inhibitor. In terms of biological role, cleaves, in an endo-type manner, the gamma-glutamyl bond between D-glutamate and L-glutamate of poly-gamma-glutamate (PGA). The protein is Gamma-DL-glutamyl hydrolase (pgdS) of Bacillus subtilis (strain 168).